The following is a 531-amino-acid chain: uncharacterized protein (531 aa).

Positions 1-28 (MNTKGIIAKLTAGALIANLLICPANTLA) are cleaved as a signal peptide. SLH domains are found at residues 29–85 (EKKT…QINK), 86–149 (QAKP…IGDL), and 150–210 (PTQF…SKRM). Positions 335 to 517 (IIIDPGHGGI…AAEAIYAGIL (183 aa)) constitute a MurNAc-LAA domain.

It in the C-terminal section; belongs to the N-acetylmuramoyl-L-alanine amidase 3 family.

The protein localises to the secreted. It localises to the cell wall. Its subcellular location is the S-layer. This is an uncharacterized protein from Bacillus anthracis.